We begin with the raw amino-acid sequence, 43 residues long: MPPKKKKVTGLIKLQIQAGAATTAPPVGPALGQHGVNIMEFCK.

The protein belongs to the universal ribosomal protein uL11 family. Part of the ribosomal stalk of the 50S ribosomal subunit. Interacts with L10 and the large rRNA to form the base of the stalk. L10 forms an elongated spine to which L12 dimers bind in a sequential fashion forming a multimeric L10(L12)X complex. In terms of processing, one or more lysine residues are methylated.

Functionally, forms part of the ribosomal stalk which helps the ribosome interact with GTP-bound translation factors. The polypeptide is Large ribosomal subunit protein uL11 (rplK) (Streptomyces galbus).